A 103-amino-acid chain; its full sequence is Large ribosomal subunit protein uL24 (103 aa).

This sequence belongs to the universal ribosomal protein uL24 family. In terms of assembly, part of the 50S ribosomal subunit.

In terms of biological role, one of two assembly initiator proteins, it binds directly to the 5'-end of the 23S rRNA, where it nucleates assembly of the 50S subunit. Its function is as follows. One of the proteins that surrounds the polypeptide exit tunnel on the outside of the subunit. The chain is Large ribosomal subunit protein uL24 from Enterococcus faecalis (strain ATCC 700802 / V583).